Consider the following 243-residue polypeptide: Sarcospan (243 aa).

The interval 1–43 (MGKNKQPRGQQRQGGPPAADAAGPDDMEPKKGTGAPKECGEEE) is disordered. The Cytoplasmic segment spans residues 1 to 53 (MGKNKQPRGQQRQGGPPAADAAGPDDMEPKKGTGAPKECGEEEPRTCCGCRFP). Residues 7–24 (PRGQQRQGGPPAADAAGP) are compositionally biased toward low complexity. A helical membrane pass occupies residues 54–74 (LLLALLQLALGIAVTVVGFLM). At 75 to 86 (ASISSSLLVRDT) the chain is on the extracellular side. Residues 87-107 (PFWAGIIVCLVAYLGLFMLCV) form a helical membrane-spanning segment. Topologically, residues 108–122 (SYQVDERTCIQFSMK) are cytoplasmic. The helical transmembrane segment at 123–143 (LLYFLLSALGLTVCVLAVAFA) threads the bilayer. Topologically, residues 144-193 (AHHYSQLTQFTCETTLDSCQCKLPSSEPLSRTFVYRDVTDCTSVTGTFKL) are extracellular. The helical transmembrane segment at 194-214 (FLLIQMILNLVCGLVCLLACF) threads the bilayer. Topologically, residues 215-243 (VMWKHRYQVFYVGVRICSLTASEGPQQKI) are cytoplasmic.

In terms of tissue distribution, isoform 1 is expressed exclusively in heart and skeletal muscle. Isoform 2 is expressed in heart, skeletal muscle, thymus, prostate, testis, ovary, small intestine, colon and spleen.

The protein localises to the cell membrane. The protein resides in the sarcolemma. Its subcellular location is the postsynaptic cell membrane. Functionally, component of the dystrophin-glycoprotein complex (DGC), a complex that spans the muscle plasma membrane and forms a link between the F-actin cytoskeleton and the extracellular matrix. Preferentially associates with the sarcoglycan subcomplex of the DGC. This Homo sapiens (Human) protein is Sarcospan (SSPN).